The chain runs to 164 residues: Osteocalcin 2b (164 aa).

Positions methionine 1 to serine 18 are cleaved as a signal peptide. Positions methionine 19 to arginine 115 are excised as a propeptide. Residues proline 30–alanine 95 are compositionally biased toward low complexity. The interval proline 30–glutamate 99 is disordered. A Gla domain is found at glutamine 128–glycine 160. Residues glutamate 130, glutamate 134, and glutamate 137 each coordinate Ca(2+). 3 positions are modified to 4-carboxyglutamate: glutamate 130, glutamate 134, and glutamate 137. A disulfide bridge connects residues cysteine 136 and cysteine 142.

It belongs to the osteocalcin/matrix Gla protein family. In terms of processing, gamma-carboxyglutamate residues are formed by vitamin K dependent carboxylation. These residues are essential for the binding of calcium.

It localises to the secreted. Its function is as follows. Binds strongly to apatite and calcium. This is Osteocalcin 2b from Oncorhynchus mykiss (Rainbow trout).